The sequence spans 254 residues: 21S rRNA pseudouridine(2819) synthase (254 aa).

Asp71 is an active-site residue.

The protein belongs to the pseudouridine synthase RluA family.

The protein resides in the mitochondrion. It carries out the reaction uridine(2819) in 21S rRNA = pseudouridine(2819) in 21S rRNA. Its function is as follows. Pseudouridylate synthase responsible for the pseudouridine-2819 formation in mitochondrial 21S rRNA. May modulate the efficiency or the fidelity of the mitochondrial translation machinery. The protein is 21S rRNA pseudouridine(2819) synthase (PUS5) of Saccharomyces cerevisiae (strain ATCC 204508 / S288c) (Baker's yeast).